The primary structure comprises 379 residues: Queuine tRNA-ribosyltransferase (379 aa).

Asp-95 (proton acceptor) is an active-site residue. Substrate-binding positions include 95 to 99 (DSGGF), Asp-149, Gln-197, and Gly-224. An RNA binding region spans residues 255–261 (GVGMPAE). Asp-274 functions as the Nucleophile in the catalytic mechanism. 4 residues coordinate Zn(2+): Cys-312, Cys-314, Cys-317, and His-343.

The protein belongs to the queuine tRNA-ribosyltransferase family. In terms of assembly, homodimer. Within each dimer, one monomer is responsible for RNA recognition and catalysis, while the other monomer binds to the replacement base PreQ1. Zn(2+) serves as cofactor.

The catalysed reaction is 7-aminomethyl-7-carbaguanine + guanosine(34) in tRNA = 7-aminomethyl-7-carbaguanosine(34) in tRNA + guanine. The protein operates within tRNA modification; tRNA-queuosine biosynthesis. Catalyzes the base-exchange of a guanine (G) residue with the queuine precursor 7-aminomethyl-7-deazaguanine (PreQ1) at position 34 (anticodon wobble position) in tRNAs with GU(N) anticodons (tRNA-Asp, -Asn, -His and -Tyr). Catalysis occurs through a double-displacement mechanism. The nucleophile active site attacks the C1' of nucleotide 34 to detach the guanine base from the RNA, forming a covalent enzyme-RNA intermediate. The proton acceptor active site deprotonates the incoming PreQ1, allowing a nucleophilic attack on the C1' of the ribose to form the product. After dissociation, two additional enzymatic reactions on the tRNA convert PreQ1 to queuine (Q), resulting in the hypermodified nucleoside queuosine (7-(((4,5-cis-dihydroxy-2-cyclopenten-1-yl)amino)methyl)-7-deazaguanosine). This chain is Queuine tRNA-ribosyltransferase, found in Solibacter usitatus (strain Ellin6076).